We begin with the raw amino-acid sequence, 891 residues long: Echinoderm microtubule-associated protein-like elp-1 (891 aa).

Residues 77–88 (DQSRSPTCSGYS) are compositionally biased toward polar residues. The disordered stretch occupies residues 77-167 (DQSRSPTCSG…ARGSPMRKWV (91 aa)). Over residues 104-117 (SPSHAPPRSSHANS) the composition is skewed to low complexity. The segment covering 118–131 (KSLYINGMNNNSEE) has biased composition (polar residues). WD repeat units lie at residues 330 to 401 (GHTC…TLMV), 404 to 447 (GFEK…REGE), 499 to 537 (DKPKTVLSMCFGENDQVVTGDSNGTISIWDPRTCKTTKQ), 541 to 579 (VHPGGVYSLTLAKSGKILSGGKDRMVSEWDLQDLVRTRR), 626 to 664 (GDPGNLTFLLTCSSNQLITSSQCGTLRIWNHIDKKVEFS), 708 to 747 (EGTAPITAVKFAPSGATFAVATKDPHLTIYRIDASKNLLV), 753 to 792 (HIPAPIVALDFSSDSQYLRGQSIGAHLLFWTKAGEICDGT), 816 to 853 (SSNGQVTAVAQCEDISACGMENGTIRIYKNPVTSVTAG), and 859 to 890 (GHGRIIKSVAFSNKIQLFSCSPTDNSVFEWCL).

This sequence belongs to the WD repeat EMAP family.

The protein localises to the cytoplasm. Its subcellular location is the cytoskeleton. May modify the assembly dynamics of microtubules, such that microtubules are slightly longer, but more dynamic. This chain is Echinoderm microtubule-associated protein-like elp-1 (elp-1), found in Caenorhabditis elegans.